A 256-amino-acid polypeptide reads, in one-letter code: Small ribosomal subunit protein eS1 (256 aa).

A2 bears the N-acetylalanine; partial mark.

This sequence belongs to the eukaryotic ribosomal protein eS1 family. As to quaternary structure, component of the small ribosomal subunit. Mature ribosomes consist of a small (40S) and a large (60S) subunit. The 40S subunit contains about 33 different proteins and 1 molecule of RNA (18S). The 60S subunit contains about 49 different proteins and 3 molecules of RNA (25S, 5.8S and 5S).

The protein resides in the cytoplasm. This chain is Small ribosomal subunit protein eS1, found in Postia placenta (strain ATCC 44394 / Madison 698-R) (Brown rot fungus).